Consider the following 744-residue polypeptide: Adenosylcobalamin-dependent ribonucleoside-triphosphate reductase (744 aa).

The cysteines at positions 120 and 424 are disulfide-linked. The segment at Ser-148 to Met-159 is effector region-1. An effector region-2 region spans residues Val-169–Val-318. Active-site residues include Cys-413 and Glu-415. Residues Phe-570–Val-631 are adenosylcobalamin-binding-1. The tract at residues Leu-690–Glu-729 is adenosylcobalamin-binding-2.

The protein belongs to the class II ribonucleoside-triphosphate reductase family. Monomer. The cofactor is adenosylcob(III)alamin.

The catalysed reaction is a 2'-deoxyribonucleoside 5'-triphosphate + [thioredoxin]-disulfide + H2O = a ribonucleoside 5'-triphosphate + [thioredoxin]-dithiol. With respect to regulation, allosterically regulated by ATP and dNTP. This Lactobacillus acidophilus (strain ATCC 700396 / NCK56 / N2 / NCFM) protein is Adenosylcobalamin-dependent ribonucleoside-triphosphate reductase (rtpR).